The sequence spans 268 residues: Hydroxyethylthiazole kinase (268 aa).

Position 45 (methionine 45) interacts with substrate. Residues arginine 121 and threonine 167 each coordinate ATP. Glycine 194 serves as a coordination point for substrate.

Belongs to the Thz kinase family. The cofactor is Mg(2+).

It catalyses the reaction 5-(2-hydroxyethyl)-4-methylthiazole + ATP = 4-methyl-5-(2-phosphooxyethyl)-thiazole + ADP + H(+). It participates in cofactor biosynthesis; thiamine diphosphate biosynthesis; 4-methyl-5-(2-phosphoethyl)-thiazole from 5-(2-hydroxyethyl)-4-methylthiazole: step 1/1. Catalyzes the phosphorylation of the hydroxyl group of 4-methyl-5-beta-hydroxyethylthiazole (THZ). The polypeptide is Hydroxyethylthiazole kinase (Bacillus cereus (strain Q1)).